Here is a 249-residue protein sequence, read N- to C-terminus: Tetrahydromethanopterin S-methyltransferase subunit A (249 aa).

The Cytoplasmic portion of the chain corresponds to 1-227 (MADKKEVIQN…KISSGYYAGK (227 aa)). 5-hydroxybenzimidazolylcob(I)amide is bound at residue H84. Residues 228 to 248 (IEGIVIGFILTLVFLIIIIQG) traverse the membrane as a helical segment. Position 249 (L249) is a topological domain, extracellular.

This sequence belongs to the MtrA family. The complex is composed of 8 subunits; MtrA, MtrB, MtrC, MtrD, MtrE, MtrF, MtrG and MtrH. The cofactor is 5-hydroxybenzimidazolylcob(I)amide.

The protein resides in the cell membrane. The catalysed reaction is 5-methyl-5,6,7,8-tetrahydromethanopterin + coenzyme M + 2 Na(+)(in) = 5,6,7,8-tetrahydromethanopterin + methyl-coenzyme M + 2 Na(+)(out). The protein operates within one-carbon metabolism; methanogenesis from CO(2); methyl-coenzyme M from 5,10-methylene-5,6,7,8-tetrahydromethanopterin: step 2/2. Part of a complex that catalyzes the formation of methyl-coenzyme M and tetrahydromethanopterin from coenzyme M and methyl-tetrahydromethanopterin. This is an energy-conserving, sodium-ion translocating step. This Methanosphaera stadtmanae (strain ATCC 43021 / DSM 3091 / JCM 11832 / MCB-3) protein is Tetrahydromethanopterin S-methyltransferase subunit A.